We begin with the raw amino-acid sequence, 119 residues long: UPF0212 protein Mlab_0931 (119 aa).

It belongs to the UPF0212 family.

The polypeptide is UPF0212 protein Mlab_0931 (Methanocorpusculum labreanum (strain ATCC 43576 / DSM 4855 / Z)).